We begin with the raw amino-acid sequence, 435 residues long: Citrate synthase (435 aa).

Active-site residues include His-311 and Asp-370.

It belongs to the citrate synthase family. As to quaternary structure, homohexamer.

The catalysed reaction is oxaloacetate + acetyl-CoA + H2O = citrate + CoA + H(+). Its pathway is carbohydrate metabolism; tricarboxylic acid cycle; isocitrate from oxaloacetate: step 1/2. The sequence is that of Citrate synthase (gltA) from Rickettsia africae (strain ESF-5).